The primary structure comprises 145 residues: D-aminoacyl-tRNA deacylase (145 aa).

A Gly-cisPro motif, important for rejection of L-amino acids motif is present at residues 137–138 (GP).

The protein belongs to the DTD family. Homodimer.

Its subcellular location is the cytoplasm. It carries out the reaction glycyl-tRNA(Ala) + H2O = tRNA(Ala) + glycine + H(+). The catalysed reaction is a D-aminoacyl-tRNA + H2O = a tRNA + a D-alpha-amino acid + H(+). An aminoacyl-tRNA editing enzyme that deacylates mischarged D-aminoacyl-tRNAs. Also deacylates mischarged glycyl-tRNA(Ala), protecting cells against glycine mischarging by AlaRS. Acts via tRNA-based rather than protein-based catalysis; rejects L-amino acids rather than detecting D-amino acids in the active site. By recycling D-aminoacyl-tRNA to D-amino acids and free tRNA molecules, this enzyme counteracts the toxicity associated with the formation of D-aminoacyl-tRNA entities in vivo and helps enforce protein L-homochirality. The protein is D-aminoacyl-tRNA deacylase of Legionella pneumophila (strain Paris).